We begin with the raw amino-acid sequence, 436 residues long: Arginine-hydroxylase NDUFAF5, mitochondrial (436 aa).

Residues 1–25 constitute a mitochondrion transit peptide; it reads MLRTTFRKGFNLKCFSKDWNQTRQY. Positions 365 to 436 are disordered; that stretch reads VTLSQQQQQQ…DEINKNKDDK (72 aa). The segment covering 369–380 has biased composition (low complexity); it reads QQQQQQGIEPQQ. Basic and acidic residues-rich tracts occupy residues 391–411 and 421–436; these read PKTD…HFEK and QNKE…KDDK.

The protein belongs to the methyltransferase superfamily.

The protein resides in the mitochondrion. Involved in the assembly of mitochondrial NADH:ubiquinone oxidoreductase complex (complex I, MT-ND1) at early stages. Probably acts as an arginine hydroxylase. May also have methyltransferase activity. This Dictyostelium discoideum (Social amoeba) protein is Arginine-hydroxylase NDUFAF5, mitochondrial.